The sequence spans 144 residues: Ribosomal RNA large subunit methyltransferase H (144 aa).

Residues Gly-92 and 111–116 (LSPMTF) contribute to the S-adenosyl-L-methionine site.

It belongs to the RNA methyltransferase RlmH family. In terms of assembly, homodimer.

The protein resides in the cytoplasm. It carries out the reaction pseudouridine(1915) in 23S rRNA + S-adenosyl-L-methionine = N(3)-methylpseudouridine(1915) in 23S rRNA + S-adenosyl-L-homocysteine + H(+). In terms of biological role, specifically methylates the pseudouridine at position 1915 (m3Psi1915) in 23S rRNA. The polypeptide is Ribosomal RNA large subunit methyltransferase H (Synechococcus sp. (strain CC9311)).